The sequence spans 39 residues: Adipokinetic prohormone type 2 (39 aa).

Glutamine 1 carries the post-translational modification Pyrrolidone carboxylic acid. The residue at position 8 (tryptophan 8) is a Tryptophan amide.

It belongs to the AKH/HRTH/RPCH family. As to quaternary structure, adipokinetic hormone precursor-related peptide (APRP) can form three type of disulfide-bond dimers: p1 (alpha-alpha), p2 (alpha-beta), and p3 (beta-beta).

The protein localises to the secreted. In terms of biological role, this hormone, released from cells in the corpora cardiaca, causes release of diglycerides from the fat body and stimulation of muscles to use these diglycerides as an energy source during energy-demanding processes. This is Adipokinetic prohormone type 2 from Schistocerca gregaria (Desert locust).